The following is a 305-amino-acid chain: Aspartate carbamoyltransferase catalytic subunit (305 aa).

R60 and T61 together coordinate carbamoyl phosphate. L-aspartate is bound at residue K88. 3 residues coordinate carbamoyl phosphate: R110, H138, and Q141. L-aspartate-binding residues include R171 and R222. Carbamoyl phosphate contacts are provided by A263 and P264.

It belongs to the aspartate/ornithine carbamoyltransferase superfamily. ATCase family. As to quaternary structure, heterododecamer (2C3:3R2) of six catalytic PyrB chains organized as two trimers (C3), and six regulatory PyrI chains organized as three dimers (R2).

It carries out the reaction carbamoyl phosphate + L-aspartate = N-carbamoyl-L-aspartate + phosphate + H(+). The protein operates within pyrimidine metabolism; UMP biosynthesis via de novo pathway; (S)-dihydroorotate from bicarbonate: step 2/3. Catalyzes the condensation of carbamoyl phosphate and aspartate to form carbamoyl aspartate and inorganic phosphate, the committed step in the de novo pyrimidine nucleotide biosynthesis pathway. The protein is Aspartate carbamoyltransferase catalytic subunit of Halalkalibacterium halodurans (strain ATCC BAA-125 / DSM 18197 / FERM 7344 / JCM 9153 / C-125) (Bacillus halodurans).